The primary structure comprises 448 residues: Putative flavin-containing monooxygenase FMO GS-OX-like 10 (448 aa).

Residue 18–23 (GAGAAG) coordinates FAD. 212-217 (GSSVSG) contributes to the NADP(+) binding site.

This sequence belongs to the FMO family. FAD serves as cofactor.

Its function is as follows. Catalyzes the conversion of methylthioalkyl glucosinolates of any chain length into methylsulfinylalkyl glucosinolates. The polypeptide is Putative flavin-containing monooxygenase FMO GS-OX-like 10 (Arabidopsis thaliana (Mouse-ear cress)).